Here is a 384-residue protein sequence, read N- to C-terminus: 8-amino-7-oxononanoate synthase (384 aa).

Arg-21 serves as a coordination point for substrate. Residue Gly-108–Tyr-109 coordinates pyridoxal 5'-phosphate. His-133 is a binding site for substrate. The pyridoxal 5'-phosphate site is built by Ser-179, His-207, and Thr-233. Lys-236 is modified (N6-(pyridoxal phosphate)lysine). Thr-350 contacts substrate.

It belongs to the class-II pyridoxal-phosphate-dependent aminotransferase family. BioF subfamily. As to quaternary structure, homodimer. Pyridoxal 5'-phosphate serves as cofactor.

The catalysed reaction is 6-carboxyhexanoyl-[ACP] + L-alanine + H(+) = (8S)-8-amino-7-oxononanoate + holo-[ACP] + CO2. The protein operates within cofactor biosynthesis; biotin biosynthesis. Functionally, catalyzes the decarboxylative condensation of pimeloyl-[acyl-carrier protein] and L-alanine to produce 8-amino-7-oxononanoate (AON), [acyl-carrier protein], and carbon dioxide. The chain is 8-amino-7-oxononanoate synthase from Buchnera aphidicola subsp. Baizongia pistaciae (strain Bp).